A 533-amino-acid polypeptide reads, in one-letter code: Probable galacturonosyltransferase 13 (533 aa).

Over 1-40 (MQLHISPSMRSITISSSNEFIDLMKIKVAARHISYRTLFH) the chain is Cytoplasmic. The chain crosses the membrane as a helical; Signal-anchor for type II membrane protein span at residues 41 to 61 (TILILAFLLPFVFILTAVVTL). Over 62–533 (EGVNKCSSFD…DFIKNCHILE (472 aa)) the chain is Lumenal. Asn-306, Asn-396, Asn-445, and Asn-520 each carry an N-linked (GlcNAc...) asparagine glycan.

Belongs to the glycosyltransferase 8 family. In terms of tissue distribution, expressed in roots, inflorescences, siliques, leaves and stems. Accumulates in pollen grains.

The protein localises to the golgi apparatus membrane. Its pathway is glycan metabolism; pectin biosynthesis. Its function is as follows. May be involved in pectin and/or xylans biosynthesis in cell walls. Together with GAUT14, required for pollen tube growth, possibly through the regulation of pectin biosynthesis and repartition in the pollen tube wall. The sequence is that of Probable galacturonosyltransferase 13 from Arabidopsis thaliana (Mouse-ear cress).